A 297-amino-acid chain; its full sequence is Probable endonuclease 4 (297 aa).

9 residues coordinate Zn(2+): His-69, His-110, Glu-145, Asp-179, His-182, His-214, Asp-227, His-229, and Glu-259.

The protein belongs to the AP endonuclease 2 family. The cofactor is Zn(2+).

The catalysed reaction is Endonucleolytic cleavage to 5'-phosphooligonucleotide end-products.. Endonuclease IV plays a role in DNA repair. It cleaves phosphodiester bonds at apurinic or apyrimidinic (AP) sites, generating a 3'-hydroxyl group and a 5'-terminal sugar phosphate. The polypeptide is Probable endonuclease 4 (Listeria monocytogenes serotype 4b (strain F2365)).